A 167-amino-acid polypeptide reads, in one-letter code: uncharacterized protein (167 aa).

Residues 140 to 167 (SSEEKKKKKKKKKEKSLHTEREKKKKKF) form a disordered region. Basic residues predominate over residues 145-154 (KKKKKKKKEK).

This is an uncharacterized protein from Saccharomyces cerevisiae (strain ATCC 204508 / S288c) (Baker's yeast).